We begin with the raw amino-acid sequence, 158 residues long: Toxin Tse2 (158 aa).

As to quaternary structure, forms a heterotetramer with Tsi2 consisting of two Tse2 dimers and two Tsi2 dimers. Formation of the complex inactivates Tse2 enzymatic activity.

The protein localises to the secreted. Functionally, toxin secreted by the H1 type VI (H1-T6SS) secretion system into the cytoplasm of recipient cells. Acts likely as a NAD-dependent cytotoxin towards both prokaryotic and eukaryotic cells. The protein is Toxin Tse2 of Pseudomonas aeruginosa (strain ATCC 15692 / DSM 22644 / CIP 104116 / JCM 14847 / LMG 12228 / 1C / PRS 101 / PAO1).